The sequence spans 276 residues: uncharacterized protein (276 aa).

10 helical membrane-spanning segments follow: residues 5-25, 31-51, 63-83, 89-109, 119-139, 142-162, 168-188, 200-220, 231-251, and 253-273; these read IVLA…KYSV, IAIA…IIIL, VFAL…LGEV, VASV…AIFL, VGII…YANI, IALV…GKSL, PITL…PFLP, LIGS…LGWY, ASVF…ILLA, and PLTL…YIVV. 2 consecutive EamA domains span residues 12 to 133 and 150 to 274; these read TFWG…VISE and VAAA…IVVR.

It belongs to the EamA transporter family.

It localises to the cell membrane. This is an uncharacterized protein from Archaeoglobus fulgidus (strain ATCC 49558 / DSM 4304 / JCM 9628 / NBRC 100126 / VC-16).